A 329-amino-acid polypeptide reads, in one-letter code: Cytosolic Fe-S cluster assembly factor NBP35 (329 aa).

The disordered stretch occupies residues 1–33; the sequence is MAPSQVEDISKTELETPEHCPGPESEQAGKEDA. The segment covering 8-18 has biased composition (basic and acidic residues); it reads DISKTELETPE. [4Fe-4S] cluster is bound by residues Cys20, Cys34, Cys37, and Cys43. 74–81 serves as a coordination point for ATP; the sequence is GKGGVGKS. Cys248 and Cys251 together coordinate [4Fe-4S] cluster.

It belongs to the Mrp/NBP35 ATP-binding proteins family. NUBP1/NBP35 subfamily. Heterotetramer of 2 NBP35 and 2 CFD1 chains. It depends on [4Fe-4S] cluster as a cofactor.

Its subcellular location is the cytoplasm. The protein resides in the nucleus. Component of the cytosolic iron-sulfur (Fe/S) protein assembly (CIA) machinery. Required for maturation of extramitochondrial Fe-S proteins. The NBP35-CFD1 heterotetramer forms a Fe-S scaffold complex, mediating the de novo assembly of an Fe-S cluster and its transfer to target apoproteins. Required for biogenesis and export of both ribosomal subunits, which may reflect a role in assembly of the Fe/S clusters in RLI1, a protein which performs rRNA processing and ribosome export. The chain is Cytosolic Fe-S cluster assembly factor NBP35 from Debaryomyces hansenii (strain ATCC 36239 / CBS 767 / BCRC 21394 / JCM 1990 / NBRC 0083 / IGC 2968) (Yeast).